A 228-amino-acid polypeptide reads, in one-letter code: Uracil-DNA glycosylase (228 aa).

Catalysis depends on Asp-64, which acts as the Proton acceptor.

The protein belongs to the uracil-DNA glycosylase (UDG) superfamily. UNG family.

The protein resides in the cytoplasm. The enzyme catalyses Hydrolyzes single-stranded DNA or mismatched double-stranded DNA and polynucleotides, releasing free uracil.. Excises uracil residues from the DNA which can arise as a result of misincorporation of dUMP residues by DNA polymerase or due to deamination of cytosine. This chain is Uracil-DNA glycosylase, found in Yersinia enterocolitica serotype O:8 / biotype 1B (strain NCTC 13174 / 8081).